The chain runs to 172 residues: Ribosome maturation factor RimM (172 aa).

Residues Glu96 to Leu170 form the PRC barrel domain.

Belongs to the RimM family. As to quaternary structure, binds ribosomal protein uS19.

Its subcellular location is the cytoplasm. An accessory protein needed during the final step in the assembly of 30S ribosomal subunit, possibly for assembly of the head region. Essential for efficient processing of 16S rRNA. May be needed both before and after RbfA during the maturation of 16S rRNA. It has affinity for free ribosomal 30S subunits but not for 70S ribosomes. In Listeria monocytogenes serotype 4b (strain CLIP80459), this protein is Ribosome maturation factor RimM.